A 305-amino-acid polypeptide reads, in one-letter code: Beta-lactamase ROB-1 (305 aa).

Positions 1 to 33 are cleaved as a signal peptide; that stretch reads MLNKLKIGTLLLLTLTACSPNSVHSVTSNPQPA. The Acyl-ester intermediate role is filled by S86. Position 248 to 250 (248 to 250) interacts with substrate; the sequence is KSG.

The protein belongs to the class-A beta-lactamase family.

The catalysed reaction is a beta-lactam + H2O = a substituted beta-amino acid. The protein is Beta-lactamase ROB-1 (rob1) of Actinobacillus pleuropneumoniae (Haemophilus pleuropneumoniae).